Reading from the N-terminus, the 540-residue chain is Glucose-6-phosphate isomerase (540 aa).

Glu-346 (proton donor) is an active-site residue. Catalysis depends on residues His-377 and Lys-505.

Belongs to the GPI family.

It is found in the cytoplasm. It carries out the reaction alpha-D-glucose 6-phosphate = beta-D-fructose 6-phosphate. It participates in carbohydrate biosynthesis; gluconeogenesis. The protein operates within carbohydrate degradation; glycolysis; D-glyceraldehyde 3-phosphate and glycerone phosphate from D-glucose: step 2/4. In terms of biological role, catalyzes the reversible isomerization of glucose-6-phosphate to fructose-6-phosphate. The sequence is that of Glucose-6-phosphate isomerase from Francisella tularensis subsp. holarctica (strain FTNF002-00 / FTA).